The chain runs to 160 residues: Endoribonuclease YbeY (160 aa).

Zn(2+)-binding residues include histidine 111, histidine 115, and histidine 121.

This sequence belongs to the endoribonuclease YbeY family. Requires Zn(2+) as cofactor.

It is found in the cytoplasm. Functionally, single strand-specific metallo-endoribonuclease involved in late-stage 70S ribosome quality control and in maturation of the 3' terminus of the 16S rRNA. The chain is Endoribonuclease YbeY from Stutzerimonas stutzeri (strain A1501) (Pseudomonas stutzeri).